We begin with the raw amino-acid sequence, 115 residues long: Holo-[acyl-carrier-protein] synthase (115 aa).

Mg(2+) contacts are provided by aspartate 8 and glutamate 56.

The protein belongs to the P-Pant transferase superfamily. AcpS family. Requires Mg(2+) as cofactor.

It is found in the cytoplasm. The catalysed reaction is apo-[ACP] + CoA = holo-[ACP] + adenosine 3',5'-bisphosphate + H(+). Functionally, transfers the 4'-phosphopantetheine moiety from coenzyme A to a Ser of acyl-carrier-protein. The sequence is that of Holo-[acyl-carrier-protein] synthase from Ureaplasma parvum serovar 3 (strain ATCC 27815 / 27 / NCTC 11736).